Here is a 622-residue protein sequence, read N- to C-terminus: Gamma tubulin complex adapter SPC72 (622 aa).

2 disordered regions span residues 1 to 58 and 221 to 263; these read MVRR…PALM and DKEE…IHDS. The segment covering 228–238 has biased composition (polar residues); the sequence is LAQSSPAGSQL. The segment covering 239–250 has biased composition (basic and acidic residues); the sequence is ESRDSPSSKEEN.

In terms of assembly, homooligomer. Interacts with CDC5, KAR1, KIN4, SPC97, SPC98, STU2 and TUB4. Phosphorylated by CDC5.

It is found in the cytoplasm. It localises to the cytoskeleton. The protein localises to the microtubule organizing center. Its subcellular location is the spindle pole body. Functionally, spindle pole body (SPB) component that acts as the gamma-tubulin complex-binding protein of the SPB outer plaque. Anchors cytoplasmic microtubules at the half bridge of the spindle pole body (SPB) and accordingly functions in nuclear position and spindle orientation, including anaphase spindle migration into the bud. Recruits KIN4 kinase to both SPBs when cytoplasmic microtubules are defective, to delay mitotic exit. Links cytoplasmic microtubules with spindle orientation checkpoint (SPOC) components and, therefore, could function as part of the sensors of spindle orientation defects. Required for cytoplasmic astral microtubule growth during mitosis. Is strictly required for mating and karyogamy. The protein is Gamma tubulin complex adapter SPC72 (SPC72) of Saccharomyces cerevisiae (strain ATCC 204508 / S288c) (Baker's yeast).